The chain runs to 231 residues: Orotidine 5'-phosphate decarboxylase (231 aa).

Substrate is bound by residues D12, K34, 61–70 (DLKFHDIPNT), T120, R181, Q190, G210, and R211. K63 (proton donor) is an active-site residue.

This sequence belongs to the OMP decarboxylase family. Type 1 subfamily. In terms of assembly, homodimer.

The catalysed reaction is orotidine 5'-phosphate + H(+) = UMP + CO2. The protein operates within pyrimidine metabolism; UMP biosynthesis via de novo pathway; UMP from orotate: step 2/2. Catalyzes the decarboxylation of orotidine 5'-monophosphate (OMP) to uridine 5'-monophosphate (UMP). In Alcanivorax borkumensis (strain ATCC 700651 / DSM 11573 / NCIMB 13689 / SK2), this protein is Orotidine 5'-phosphate decarboxylase.